The chain runs to 95 residues: Aspartyl/glutamyl-tRNA(Asn/Gln) amidotransferase subunit C (95 aa).

Belongs to the GatC family. Heterotrimer of A, B and C subunits.

It catalyses the reaction L-glutamyl-tRNA(Gln) + L-glutamine + ATP + H2O = L-glutaminyl-tRNA(Gln) + L-glutamate + ADP + phosphate + H(+). It carries out the reaction L-aspartyl-tRNA(Asn) + L-glutamine + ATP + H2O = L-asparaginyl-tRNA(Asn) + L-glutamate + ADP + phosphate + 2 H(+). Its function is as follows. Allows the formation of correctly charged Asn-tRNA(Asn) or Gln-tRNA(Gln) through the transamidation of misacylated Asp-tRNA(Asn) or Glu-tRNA(Gln) in organisms which lack either or both of asparaginyl-tRNA or glutaminyl-tRNA synthetases. The reaction takes place in the presence of glutamine and ATP through an activated phospho-Asp-tRNA(Asn) or phospho-Glu-tRNA(Gln). This is Aspartyl/glutamyl-tRNA(Asn/Gln) amidotransferase subunit C from Syntrophotalea carbinolica (strain DSM 2380 / NBRC 103641 / GraBd1) (Pelobacter carbinolicus).